The chain runs to 464 residues: Multifunctional dye peroxidase DyP2 (464 aa).

The Proton acceptor role is filled by aspartate 203. Mn(2+)-binding residues include glutamate 258, glutamate 273, and glutamate 284. Residue histidine 321 participates in heme binding.

This sequence belongs to the DyP-type peroxidase family. In terms of assembly, exists both as a monomeric and oligomeric species in solution; the monomeric form contains no bound heme cofactor and is inactive. Requires heme b as cofactor. It depends on Mn(2+) as a cofactor.

It is found in the secreted. It catalyses the reaction 1-(4-hydroxy-3-methoxyphenyl)-2-(2-methoxyphenoxy)propane-1,3-diol + H2O2 = guaiacol + vanillin + glycolaldehyde + H2O. The enzyme catalyses 2 Mn(2+) + H2O2 + 2 H(+) = 2 Mn(3+) + 2 H2O. It carries out the reaction 2 a phenolic donor + H2O2 = 2 a phenolic radical donor + 2 H2O. The catalysed reaction is Reactive Blue 5 + 2 H2O2 = 2,2'-disulfonyl azobenzene + 3-[(4-amino-6-chloro-1,3,5-triazin-2-yl)amino]benzenesulfonate + phthalate + 2 H2O + 2 H(+). Its function is as follows. Displays both high peroxidase and manganese peroxidase activity. Is likely involved in lignin degradation. Also has a Mn-dependent oxidase mode of action that expands its substrate scope in vitro; is thus able to catalyze the O(2)- and Mn-dependent oxidative decarboxylation of 4-methoxymandelate to anisaldehyde. The chain is Multifunctional dye peroxidase DyP2 from Amycolatopsis sp. (strain ATCC 39116 / 75iv2).